Consider the following 710-residue polypeptide: Solute carrier organic anion transporter family member 3A1 (710 aa).

Met-1 carries the post-translational modification N-acetylmethionine. Positions 1–15 are enriched in gly residues; the sequence is MQGKKPGGSSGGGRS. Residues 1–25 form a disordered region; that stretch reads MQGKKPGGSSGGGRSGELQGDEAQR. At 1–40 the chain is on the cytoplasmic side; it reads MQGKKPGGSSGGGRSGELQGDEAQRNKKKKKKVSCFSNIK. Residues 41–60 traverse the membrane as a helical segment; the sequence is IFLVSECALMLAQGTVGAYL. Residues 61 to 79 lie on the Extracellular side of the membrane; it reads VSVLTTLERRFNLQSADVG. A helical transmembrane segment spans residues 80–100; that stretch reads VIASSFEIGNLALILFVSYFG. Residues 101–106 lie on the Cytoplasmic side of the membrane; that stretch reads ARGHRP. The chain crosses the membrane as a helical span at residues 107-131; the sequence is RLIGCGGIVMALGALLSALPEFLTH. The Extracellular segment spans residues 132 to 174; that stretch reads QYKYEAGEIRWGAEGRDVCAANGSGGDEGPDPDLICRNRTATN. N-linked (GlcNAc...) asparagine glycans are attached at residues Asn-153 and Asn-169. The helical transmembrane segment at 175–203 threads the bilayer; it reads MMYLLLIGAQVLLGIGATPVQPLGVSYID. Residues 204–222 are Cytoplasmic-facing; the sequence is DHVRRKDSSLYIGILFTML. The chain crosses the membrane as a helical span at residues 223–243; that stretch reads VFGPACGFILGSFCTKIYVDA. The Extracellular segment spans residues 244–261; that stretch reads VFIDTSNLDITPDDPRWI. Residues 262–286 traverse the membrane as a helical segment; it reads GAWWGGFLLCGALLFFSSLLMFGFP. Over 287 to 344 the chain is Cytoplasmic; that stretch reads QSLPPHSEPAMESEQAMLSEREYERPKPSNGVLRHPLEPDSSASCFQQLRVIPKVTKH. Residues 345 to 366 traverse the membrane as a helical segment; the sequence is LLSNPVFTCIILAACMEIAVVA. Residues 367–386 lie on the Extracellular side of the membrane; that stretch reads GFAAFLGKYLEQQFNLTTSS. An N-linked (GlcNAc...) asparagine glycan is attached at Asn-381. The helical transmembrane segment at 387–410 threads the bilayer; it reads ANQLLGMTAIPCACLGIFLGGLLV. Residues 411–414 lie on the Cytoplasmic side of the membrane; it reads KKLS. Residues 415–438 form a helical membrane-spanning segment; the sequence is LSALGAIRMAMLVNLVSTACYVSF. At 439–539 the chain is on the extracellular side; sequence LFLGCDTGPV…PGCQEAFLTF (101 aa). A glycan (N-linked (GlcNAc...) asparagine) is linked at Asn-457. In terms of domain architecture, Kazal-like spans 465–513; the sequence is LDPYSPCNNNCECQTDSFTPVCGADGITYLSACFAGCNSTNLTGCACLT. 3 disulfides stabilise this stretch: Cys-471–Cys-501, Cys-477–Cys-497, and Cys-486–Cys-511. Residues Asn-502, Asn-505, and Asn-519 are each glycosylated (N-linked (GlcNAc...) asparagine). A helical membrane pass occupies residues 540–562; it reads LCVMCICSLIGAMAQTPSVIILI. At 563-571 the chain is on the cytoplasmic side; sequence RTVSPELKS. The chain crosses the membrane as a helical span at residues 572–597; that stretch reads YALGVLFLLLRLLGFIPPPLIFGAGI. The Extracellular segment spans residues 598 to 630; that stretch reads DSTCLFWSTFCGEQGACVLYDNVVYRYLYVSIA. Residues 631–648 traverse the membrane as a helical segment; sequence IALKSFAFILYTTTWQCL. The Cytoplasmic portion of the chain corresponds to 649–705; that stretch reads RKNYKRYIKNHEGGLSTSEFFASTLTLDNLGRDPVPANQTHRTKFIYNLEDHEWCEN.

Belongs to the organo anion transporter (TC 2.A.60) family. As to expression, generally the expression of isoform 1 is higher than that of isoform 2. Expressed in placental trophoblasts. Expressed in pancreas, kidney, liver, lung, brain, heart, cerebellum, peripheral blood leukocyte, colon, small intestine, ovary, testis, prostate, thyroid, thymus and spleen. Expressed in fetal brain, heart, kidney, liver, lung, skeletal muscle, spleen and pancreas. In testis, detected in spermatogonia at different stages and absent from Sertoli cells. Expressed in the choroid plexus epithelium, at the basolateral membrane. In brain, also very abundant in the gray matter of the frontal cortex, but not associated with neuronal cell bodies. Not detected in the white matter. In terms of tissue distribution, expressed in heart, brain, cerebellum, testis, lung, thyroid, spoleen and liver. In testis, primarily localized to the basal membrane of Sertoli cells and weakly expressed within the tubules. In testis, also present in spermatogonia at different stages. In brain, expressed in the choroid plexus epithelium, at the apical membrane as well as in the subapical intracellular vesicular compartments. In brain, also associated with neuronal bodies and axons in both the gray and the white matters of the frontal cortex.

It localises to the basolateral cell membrane. Its subcellular location is the apical cell membrane. It is found in the basal cell membrane. It catalyses the reaction L-thyroxine(out) = L-thyroxine(in). The catalysed reaction is prostaglandin E1(out) = prostaglandin E1(in). It carries out the reaction prostaglandin E2(out) = prostaglandin E2(in). The enzyme catalyses prostaglandin F2alpha(out) = prostaglandin F2alpha(in). It catalyses the reaction (5Z,8Z,11Z,14Z)-eicosatetraenoate(out) = (5Z,8Z,11Z,14Z)-eicosatetraenoate(in). The catalysed reaction is taurocholate(out) = taurocholate(in). It carries out the reaction glycocholate(out) = glycocholate(in). The enzyme catalyses estrone 3-sulfate(out) = estrone 3-sulfate(in). It catalyses the reaction argipressin(out) = argipressin(in). Stimulated by extracellular acidic pH. In terms of biological role, putative organic anion antiporter with apparent broad substrate specificity. Recognizes various substrates including thyroid hormone L-thyroxine, prostanoids such as prostaglandin E1 and E2, bile acids such as taurocholate, glycolate and glycochenodeoxycholate and peptide hormones such as L-arginine vasopressin, likely operating in a tissue-specific manner. The transport mechanism, its electrogenicity and potential tissue-specific counterions remain to be elucidated. The sequence is that of Solute carrier organic anion transporter family member 3A1 (SLCO3A1) from Homo sapiens (Human).